We begin with the raw amino-acid sequence, 99 residues long: Small ribosomal subunit protein bS20 (99 aa).

This sequence belongs to the bacterial ribosomal protein bS20 family.

Its function is as follows. Binds directly to 16S ribosomal RNA. The polypeptide is Small ribosomal subunit protein bS20 (Thermotoga neapolitana (strain ATCC 49049 / DSM 4359 / NBRC 107923 / NS-E)).